The sequence spans 22 residues: Cysteine protease inhibitor 4 (22 aa).

This sequence belongs to the protease inhibitor I3 (leguminous Kunitz-type inhibitor) family. In terms of tissue distribution, tubers.

It is found in the vacuole. Functionally, inhibitor of papain (cysteine protease). Does not inhibit trypsin, chymotrypsin nor elastase (serine proteases). May protect the plant by inhibiting proteases of invading organisms. This is Cysteine protease inhibitor 4 from Solanum tuberosum (Potato).